The primary structure comprises 214 residues: Redox-sensing transcriptional repressor Rex (214 aa).

Positions 17 to 56 (LYYRIFKRFHADQVEKASSKQIADAMGIDSATVRRDFSYF) form a DNA-binding region, H-T-H motif. NAD(+) is bound at residue 91-96 (GCGNIG).

The protein belongs to the transcriptional regulatory Rex family. In terms of assembly, homodimer.

It localises to the cytoplasm. Modulates transcription in response to changes in cellular NADH/NAD(+) redox state. This chain is Redox-sensing transcriptional repressor Rex, found in Streptococcus pyogenes serotype M12 (strain MGAS9429).